A 390-amino-acid polypeptide reads, in one-letter code: Elongation factor Tu 1 (390 aa).

The 192-residue stretch at 10–201 (KPHVNVGTIG…LDEYVAVPPR (192 aa)) folds into the tr-type G domain. The G1 stretch occupies residues 19–26 (GHVDHGKT). 19–26 (GHVDHGKT) is a binding site for GTP. Residue T26 participates in Mg(2+) binding. Residues 55-59 (GITIA) form a G2 region. Positions 76–79 (DCPG) are G3. Residues 76-80 (DCPGH) and 131-134 (NKAD) each bind GTP. The tract at residues 131 to 134 (NKAD) is G4. Residues 168 to 170 (SAL) form a G5 region.

Belongs to the TRAFAC class translation factor GTPase superfamily. Classic translation factor GTPase family. EF-Tu/EF-1A subfamily. Monomer.

It is found in the cytoplasm. The catalysed reaction is GTP + H2O = GDP + phosphate + H(+). Its function is as follows. GTP hydrolase that promotes the GTP-dependent binding of aminoacyl-tRNA to the A-site of ribosomes during protein biosynthesis. This is Elongation factor Tu 1 from Wolbachia pipientis wMel.